A 129-amino-acid polypeptide reads, in one-letter code: Cocaine- and amphetamine-regulated transcript protein (129 aa).

Positions 1-27 (MESSRLRLLPVLGAALLLLLPLLGAGA) are cleaved as a signal peptide. Tyr41 carries the post-translational modification Phosphotyrosine. At Ser48 the chain carries Phosphoserine. Cystine bridges form between Cys95-Cys113, Cys101-Cys121, and Cys115-Cys128.

This sequence belongs to the CART family. In terms of tissue distribution, neuroendocrine tissues. Predominantly expressed in the hypothalamus, pituitary, and longitudinal muscle-myenteric plexus. Abundant expression is also seen in the midbrain/thalamus and eye. A lower level expression is seen in the other brain regions and adrenal.

It is found in the secreted. Functionally, satiety factor closely associated with the actions of leptin and neuropeptide y; this anorectic peptide inhibits both normal and starvation-induced feeding and completely blocks the feeding response induced by neuropeptide Y and regulated by leptin in the hypothalamus. This Rattus norvegicus (Rat) protein is Cocaine- and amphetamine-regulated transcript protein (Cartpt).